Here is a 240-residue protein sequence, read N- to C-terminus: MLRLFLRRFTKALLWFAGGSVLLVLVFRFVPPPGTALMVERKIESWVDGEPIDLQRTWKPWDEISDDLKVAVIAGEDQKFPEHWGFDLSAIKAALAHNELGGSIRGASTLSQQVSKNLFLWSGRSYLRKGLEAWFTALIEVFWPKQRILEVYLNSVEWDDGVFGAEAAARHHFGVGARSLSRQQASYLAAVLPNPRVWSASHPTAYVSRRAGWIRQQMSQLGGDSYLLTLNDSRRAPWAQ.

The chain crosses the membrane as a helical span at residues 12–31; the sequence is ALLWFAGGSVLLVLVFRFVP.

The protein belongs to the glycosyltransferase 51 family.

It is found in the cell inner membrane. It carries out the reaction [GlcNAc-(1-&gt;4)-Mur2Ac(oyl-L-Ala-gamma-D-Glu-L-Lys-D-Ala-D-Ala)](n)-di-trans,octa-cis-undecaprenyl diphosphate + beta-D-GlcNAc-(1-&gt;4)-Mur2Ac(oyl-L-Ala-gamma-D-Glu-L-Lys-D-Ala-D-Ala)-di-trans,octa-cis-undecaprenyl diphosphate = [GlcNAc-(1-&gt;4)-Mur2Ac(oyl-L-Ala-gamma-D-Glu-L-Lys-D-Ala-D-Ala)](n+1)-di-trans,octa-cis-undecaprenyl diphosphate + di-trans,octa-cis-undecaprenyl diphosphate + H(+). It participates in cell wall biogenesis; peptidoglycan biosynthesis. Its function is as follows. Peptidoglycan polymerase that catalyzes glycan chain elongation from lipid-linked precursors. In Pseudomonas fluorescens (strain Pf0-1), this protein is Biosynthetic peptidoglycan transglycosylase.